The chain runs to 235 residues: 2-C-methyl-D-erythritol 4-phosphate cytidylyltransferase (235 aa).

The protein belongs to the IspD/TarI cytidylyltransferase family. IspD subfamily.

The enzyme catalyses 2-C-methyl-D-erythritol 4-phosphate + CTP + H(+) = 4-CDP-2-C-methyl-D-erythritol + diphosphate. The protein operates within isoprenoid biosynthesis; isopentenyl diphosphate biosynthesis via DXP pathway; isopentenyl diphosphate from 1-deoxy-D-xylulose 5-phosphate: step 2/6. Its function is as follows. Catalyzes the formation of 4-diphosphocytidyl-2-C-methyl-D-erythritol from CTP and 2-C-methyl-D-erythritol 4-phosphate (MEP). The sequence is that of 2-C-methyl-D-erythritol 4-phosphate cytidylyltransferase from Mycolicibacterium paratuberculosis (strain ATCC BAA-968 / K-10) (Mycobacterium paratuberculosis).